The chain runs to 141 residues: Nucleoside diphosphate kinase (141 aa).

Positions 11, 59, 87, 93, 104, and 114 each coordinate ATP.

It belongs to the NDK family. Homotetramer. Mg(2+) serves as cofactor.

Its subcellular location is the cytoplasm. It catalyses the reaction a 2'-deoxyribonucleoside 5'-diphosphate + ATP = a 2'-deoxyribonucleoside 5'-triphosphate + ADP. It carries out the reaction a ribonucleoside 5'-diphosphate + ATP = a ribonucleoside 5'-triphosphate + ADP. In terms of biological role, major role in the synthesis of nucleoside triphosphates other than ATP. The ATP gamma phosphate is transferred to the NDP beta phosphate via a ping-pong mechanism, using a phosphorylated active-site intermediate. This chain is Nucleoside diphosphate kinase, found in Saccharophagus degradans (strain 2-40 / ATCC 43961 / DSM 17024).